Consider the following 333-residue polypeptide: Ketol-acid reductoisomerase (NADP(+)) (333 aa).

The region spanning Thr6 to Thr186 is the KARI N-terminal Rossmann domain. NADP(+) is bound by residues Tyr29–Gln32, Lys52, Ser55, Ser57, and Asp87–Gln90. The active site involves His112. Gly138 is a binding site for NADP(+). Residues Thr187–Ser332 enclose the KARI C-terminal knotted domain. Mg(2+) is bound by residues Asp195, Glu199, Glu231, and Glu235. Substrate is bound at residue Ser256.

This sequence belongs to the ketol-acid reductoisomerase family. Mg(2+) is required as a cofactor.

The enzyme catalyses (2R)-2,3-dihydroxy-3-methylbutanoate + NADP(+) = (2S)-2-acetolactate + NADPH + H(+). The catalysed reaction is (2R,3R)-2,3-dihydroxy-3-methylpentanoate + NADP(+) = (S)-2-ethyl-2-hydroxy-3-oxobutanoate + NADPH + H(+). Its pathway is amino-acid biosynthesis; L-isoleucine biosynthesis; L-isoleucine from 2-oxobutanoate: step 2/4. It functions in the pathway amino-acid biosynthesis; L-valine biosynthesis; L-valine from pyruvate: step 2/4. Functionally, involved in the biosynthesis of branched-chain amino acids (BCAA). Catalyzes an alkyl-migration followed by a ketol-acid reduction of (S)-2-acetolactate (S2AL) to yield (R)-2,3-dihydroxy-isovalerate. In the isomerase reaction, S2AL is rearranged via a Mg-dependent methyl migration to produce 3-hydroxy-3-methyl-2-ketobutyrate (HMKB). In the reductase reaction, this 2-ketoacid undergoes a metal-dependent reduction by NADPH to yield (R)-2,3-dihydroxy-isovalerate. This chain is Ketol-acid reductoisomerase (NADP(+)), found in Tropheryma whipplei (strain TW08/27) (Whipple's bacillus).